The primary structure comprises 378 residues: Chorismate synthase (378 aa).

The tract at residues 42 to 61 (IQAELDRRRPGQSPITTPRQ) is disordered. Arg49 provides a ligand contact to NADP(+). Residues 126–128 (RAS), Gly287, 302–306 (KPTAT), and Arg328 contribute to the FMN site.

Belongs to the chorismate synthase family. In terms of assembly, homotetramer. It depends on FMNH2 as a cofactor.

It catalyses the reaction 5-O-(1-carboxyvinyl)-3-phosphoshikimate = chorismate + phosphate. It functions in the pathway metabolic intermediate biosynthesis; chorismate biosynthesis; chorismate from D-erythrose 4-phosphate and phosphoenolpyruvate: step 7/7. Functionally, catalyzes the anti-1,4-elimination of the C-3 phosphate and the C-6 proR hydrogen from 5-enolpyruvylshikimate-3-phosphate (EPSP) to yield chorismate, which is the branch point compound that serves as the starting substrate for the three terminal pathways of aromatic amino acid biosynthesis. This reaction introduces a second double bond into the aromatic ring system. The chain is Chorismate synthase from Synechococcus sp. (strain JA-2-3B'a(2-13)) (Cyanobacteria bacterium Yellowstone B-Prime).